Consider the following 393-residue polypeptide: 5-azacytidine-induced protein 2 (393 aa).

Positions Met-1 to Asp-198 are homodimerization. Residues Ala-40–Asp-198 adopt a coiled-coil conformation. The tract at residues Ser-217 to Cys-258 is interaction with TBK1 and IKBKE. Ser-319 carries the phosphoserine modification. Disordered regions lie at residues Thr-321–Tyr-340 and Leu-345–His-393. Ser-354 is modified (phosphoserine). Polar residues predominate over residues Gln-384 to His-393.

In terms of assembly, homodimer. Interacts with IKBKE, TBK1 and TICAM1. Interacts with TAX1BP1. Interacts with CALCOCO2. Post-translationally, ubiquitinated via 'Lys-48'-linked polyubiquitination by TRIM38, leading to its degradation.

The protein resides in the cytoplasm. Adapter protein which binds TBK1 and IKBKE playing a role in antiviral innate immunity. Activates serine/threonine-protein kinase TBK1 and facilitates its oligomerization. Enhances the phosphorylation of NF-kappa-B p65 subunit RELA by TBK1. Promotes TBK1-induced as well as TNF-alpha or PMA-induced activation of NF-kappa-B. Participates in IFNB promoter activation via TICAM1. In Bos taurus (Bovine), this protein is 5-azacytidine-induced protein 2 (AZI2).